We begin with the raw amino-acid sequence, 230 residues long: Large ribosomal subunit protein uL1 (230 aa).

It belongs to the universal ribosomal protein uL1 family. Part of the 50S ribosomal subunit.

In terms of biological role, binds directly to 23S rRNA. The L1 stalk is quite mobile in the ribosome, and is involved in E site tRNA release. Functionally, protein L1 is also a translational repressor protein, it controls the translation of the L11 operon by binding to its mRNA. The protein is Large ribosomal subunit protein uL1 of Bradyrhizobium sp. (strain BTAi1 / ATCC BAA-1182).